The sequence spans 837 residues: Tuftelin-interacting protein 11 (837 aa).

Composition is skewed to basic and acidic residues over residues 1 to 13 and 44 to 64; these read MSLS…GEGH and QTKE…EERP. Disordered stretches follow at residues 1–21, 34–73, and 85–135; these read MSLS…DDER, EFNP…RARD, and LKKG…FAGG. A required for interaction with DHX15 region spans residues 1–50; it reads MSLSHLYRDGEGHLDDDDDERENFEITDWDLQNEFNPNRQRHWQTKEEAT. Phosphoserine is present on residues S2, S59, S95, and S98. The span at 91-100 shows a compositional bias: acidic residues; the sequence is EEADSEDSDA. Basic and acidic residues predominate over residues 101–116; it reads EEKPVKQEDFPKDLGP. A Phosphoserine modification is found at S144. The 47-residue stretch at 149-195 folds into the G-patch domain; sequence TKGIGQKLLQKMGYVPGRGLGKNAQGIINPIEAKQRKGKGAVGAYGS. The tract at residues 183-236 is disordered; it reads QRKGKGAVGAYGSERTTQSLQDFPVADSEEEAEEEFQKELSQWRKDPSGSKKKP. S210 carries the post-translational modification Phosphoserine. A compositionally biased stretch (basic and acidic residues) spans 217 to 231; the sequence is EFQKELSQWRKDPSG. The short motif at 700–705 is the Nuclear localization signal element; sequence VKDKFN. The interval 710–734 is required for nuclear speckle localization; sequence IMNRAVSSNVGAYMQPGARENIAYL.

This sequence belongs to the TFP11/STIP family. Identified in the spliceosome C complex. Found in the Intron Large (IL) complex, a post-mRNA release spliceosomal complex containing the excised intron, U2, U5 and U6 snRNPs, and splicing factors. Interacts with TUFT1. Interacts with DHX15; indicative for a recruitment of DHX15 to the IL complex. Interacts with GCFC2.

Its subcellular location is the cytoplasm. The protein resides in the nucleus. Involved in pre-mRNA splicing, specifically in spliceosome disassembly during late-stage splicing events. Intron turnover seems to proceed through reactions in two lariat-intron associated complexes termed Intron Large (IL) and Intron Small (IS). In cooperation with DHX15 seems to mediate the transition of the U2, U5 and U6 snRNP-containing IL complex to the snRNP-free IS complex leading to efficient debranching and turnover of excised introns. May play a role in the differentiation of ameloblasts and odontoblasts or in the forming of the enamel extracellular matrix. In Rattus norvegicus (Rat), this protein is Tuftelin-interacting protein 11 (Tfip11).